A 518-amino-acid polypeptide reads, in one-letter code: Serine/threonine-protein kinase UL13 (518 aa).

Disordered stretches follow at residues 1-22 and 39-120; these read MDESGRQRPASHVAADISPQGA and SRRA…PSPP. A compositionally biased stretch (low complexity) spans 44 to 61; it reads GRPSGPSPRDGAVSGARP. In terms of domain architecture, Protein kinase spans 151-518; sequence PGARSFGGSG…ANPAARHSLS (368 aa). ATP-binding positions include 157–165 and K176; that span reads GGSGGYGEV. Residue D277 is the Proton acceptor of the active site.

It belongs to the protein kinase superfamily. Ser/Thr protein kinase family. Post-translationally, autophosphorylated.

It is found in the virion tegument. The protein localises to the host nucleus. The enzyme catalyses L-seryl-[protein] + ATP = O-phospho-L-seryl-[protein] + ADP + H(+). It carries out the reaction L-threonyl-[protein] + ATP = O-phospho-L-threonyl-[protein] + ADP + H(+). Its function is as follows. Multifunctional serine/threonine kinase that plays a role in several processes including egress of virus particles from the nucleus, modulation of the actin cytoskeleton and regulation of viral and cellular gene expression. Regulates the nuclear localization of viral envelopment factors UL34 and UL31, by phosphorylating the US3 kinase, indicating a role in nuclear egress. Disrupts host nuclear lamins, including LMNA and LMNB1. Phosphorylates the viral Fc receptor composed of glycoproteins E (gE) and I (gI). Phosphorylation of glycoprotein E (gE) by UL13 alters its subcellular localization, from the host early endosome to the plasma membrane. Participates in the transcriptional regulation of cellular and viral mRNAs mainly by phosphorylating the viral transcriptional regulator ICP22. Additional substrates have been identified, including UL41, UL49 or host EF1D. This Homo sapiens (Human) protein is Serine/threonine-protein kinase UL13.